A 536-amino-acid chain; its full sequence is Phosphoenolpyruvate carboxykinase (ATP) (536 aa).

Positions 61, 195, and 201 each coordinate substrate. Residues Lys-201, His-220, and 236–244 (GLSGTGKTT) contribute to the ATP site. Lys-201 and His-220 together coordinate Mn(2+). Position 257 (Asp-257) interacts with Mn(2+). Residues Glu-285, Arg-322, and Thr-447 each coordinate ATP. Residue Arg-322 participates in substrate binding.

It belongs to the phosphoenolpyruvate carboxykinase (ATP) family. Requires Mn(2+) as cofactor.

Its subcellular location is the cytoplasm. It catalyses the reaction oxaloacetate + ATP = phosphoenolpyruvate + ADP + CO2. The protein operates within carbohydrate biosynthesis; gluconeogenesis. Involved in the gluconeogenesis. Catalyzes the conversion of oxaloacetate (OAA) to phosphoenolpyruvate (PEP) through direct phosphoryl transfer between the nucleoside triphosphate and OAA. The protein is Phosphoenolpyruvate carboxykinase (ATP) of Rhizobium johnstonii (strain DSM 114642 / LMG 32736 / 3841) (Rhizobium leguminosarum bv. viciae).